A 645-amino-acid polypeptide reads, in one-letter code: Acetyl-coenzyme A synthetase (645 aa).

Residues Arg190–Arg193 and Thr308 each bind CoA. ATP-binding positions include Gly384 to Pro386, Asp408 to Thr413, Asp497, and Arg512. Ser520 contacts CoA. Arg523 provides a ligand contact to ATP. Positions 534, 536, and 539 each coordinate Mg(2+). The residue at position 606 (Lys606) is an N6-acetyllysine.

Belongs to the ATP-dependent AMP-binding enzyme family. Mg(2+) serves as cofactor. Acetylated. Deacetylation by the SIR2-homolog deacetylase activates the enzyme.

It catalyses the reaction acetate + ATP + CoA = acetyl-CoA + AMP + diphosphate. Its function is as follows. Catalyzes the conversion of acetate into acetyl-CoA (AcCoA), an essential intermediate at the junction of anabolic and catabolic pathways. AcsA undergoes a two-step reaction. In the first half reaction, AcsA combines acetate with ATP to form acetyl-adenylate (AcAMP) intermediate. In the second half reaction, it can then transfer the acetyl group from AcAMP to the sulfhydryl group of CoA, forming the product AcCoA. The polypeptide is Acetyl-coenzyme A synthetase (Halorhodospira halophila (strain DSM 244 / SL1) (Ectothiorhodospira halophila (strain DSM 244 / SL1))).